The following is a 275-amino-acid chain: AA9 family lytic polysaccharide monooxygenase D (275 aa).

Positions 1–17 (MKLSLLAIAAIAPFVSA) are cleaved as a signal peptide. Positions 18 and 101 each coordinate Cu(2+). C67 and C189 are oxidised to a cystine. Residue H176 participates in O2 binding. Residue Y186 coordinates Cu(2+). An N-linked (GlcNAc...) asparagine glycan is attached at N220.

It belongs to the polysaccharide monooxygenase AA9 family. It depends on Cu(2+) as a cofactor.

Its subcellular location is the secreted. It carries out the reaction [(1-&gt;4)-beta-D-glucosyl]n+m + reduced acceptor + O2 = 4-dehydro-beta-D-glucosyl-[(1-&gt;4)-beta-D-glucosyl]n-1 + [(1-&gt;4)-beta-D-glucosyl]m + acceptor + H2O.. Its function is as follows. Lytic polysaccharide monooxygenase (LPMO) that depolymerizes crystalline and amorphous polysaccharides via the oxidation of scissile alpha- or beta-(1-4)-glycosidic bonds, yielding C1 or C4 oxidation products. Catalysis by LPMOs requires the reduction of the active-site copper from Cu(II) to Cu(I) by a reducing agent and H(2)O(2) or O(2) as a cosubstrate. The polypeptide is AA9 family lytic polysaccharide monooxygenase D (Aspergillus tamarii).